The following is a 359-amino-acid chain: Probable ribonucleotide transport ATP-binding protein mkl (359 aa).

Residues 28 to 264 (IEVNGLTKSF…DEPVVRQFLN (237 aa)) enclose the ABC transporter domain. An ATP-binding site is contributed by 60 to 67 (GPSGTGKS).

This sequence belongs to the ABC transporter superfamily.

Its function is as follows. Not known, could be involved in the transport of ribonucleotides. This Mycobacterium bovis (strain ATCC BAA-935 / AF2122/97) protein is Probable ribonucleotide transport ATP-binding protein mkl (mkl).